The following is a 376-amino-acid chain: Glutamate 5-kinase (376 aa).

Lys10 serves as a coordination point for ATP. Substrate is bound by residues Ser50, Asp137, and Asn149. An ATP-binding site is contributed by 169-170; sequence TD. The 79-residue stretch at 275 to 353 folds into the PUA domain; that stretch reads RGRLVLDAGA…AEIAGVLGFM (79 aa).

It belongs to the glutamate 5-kinase family.

The protein localises to the cytoplasm. It carries out the reaction L-glutamate + ATP = L-glutamyl 5-phosphate + ADP. The protein operates within amino-acid biosynthesis; L-proline biosynthesis; L-glutamate 5-semialdehyde from L-glutamate: step 1/2. Functionally, catalyzes the transfer of a phosphate group to glutamate to form L-glutamate 5-phosphate. This Alcanivorax borkumensis (strain ATCC 700651 / DSM 11573 / NCIMB 13689 / SK2) protein is Glutamate 5-kinase.